A 196-amino-acid chain; its full sequence is Small ribosomal subunit protein uS4c (196 aa).

The interval leucine 15–arginine 41 is disordered. Residues methionine 89–asparagine 150 enclose the S4 RNA-binding domain.

The protein belongs to the universal ribosomal protein uS4 family. Part of the 30S ribosomal subunit. Contacts protein S5. The interaction surface between S4 and S5 is involved in control of translational fidelity.

The protein localises to the plastid. Its subcellular location is the chloroplast. One of the primary rRNA binding proteins, it binds directly to 16S rRNA where it nucleates assembly of the body of the 30S subunit. Its function is as follows. With S5 and S12 plays an important role in translational accuracy. This chain is Small ribosomal subunit protein uS4c (rps4), found in Narcissus odorus (Campernelle jonquil).